The sequence spans 148 residues: MTIQLHNTTRRALPEAKLKKAVRLVLSEEGGKAVSIDAIYCGGRMMRRINREFLGHDYDTDTVTFPYSEGLVVEGEFYVSLDEVGRNAVRFKSGFEQELLRVTIHSVLHLLGYDDASPEERGRMRQKEDRYLRILGAGVSSTEERSQV.

His-105, His-109, and Asp-115 together coordinate Zn(2+).

Belongs to the endoribonuclease YbeY family. Requires Zn(2+) as cofactor.

It is found in the cytoplasm. Single strand-specific metallo-endoribonuclease involved in late-stage 70S ribosome quality control and in maturation of the 3' terminus of the 16S rRNA. This chain is Endoribonuclease YbeY, found in Chlorobium phaeovibrioides (strain DSM 265 / 1930) (Prosthecochloris vibrioformis (strain DSM 265)).